The sequence spans 86 residues: Co-chaperonin GroES (86 aa).

It belongs to the GroES chaperonin family. Heptamer of 7 subunits arranged in a ring. Interacts with the chaperonin GroEL.

The protein resides in the cytoplasm. Together with the chaperonin GroEL, plays an essential role in assisting protein folding. The GroEL-GroES system forms a nano-cage that allows encapsulation of the non-native substrate proteins and provides a physical environment optimized to promote and accelerate protein folding. GroES binds to the apical surface of the GroEL ring, thereby capping the opening of the GroEL channel. The polypeptide is Co-chaperonin GroES (Campylobacter jejuni subsp. doylei (strain ATCC BAA-1458 / RM4099 / 269.97)).